The primary structure comprises 100 residues: Ribosomal processing cysteine protease Prp (100 aa).

His16 (proton donor) is an active-site residue. Residue Cys28 is the Nucleophile of the active site.

Belongs to the Prp family. Homodimer.

Its function is as follows. An essential cysteine protease that cleaves the N-terminus from ribosomal protein bL27. The protein is Ribosomal processing cysteine protease Prp of Mycoplasma pneumoniae (strain ATCC 29342 / M129 / Subtype 1) (Mycoplasmoides pneumoniae).